A 90-amino-acid polypeptide reads, in one-letter code: Small ribosomal subunit protein bS18 (90 aa).

The protein belongs to the bacterial ribosomal protein bS18 family. Part of the 30S ribosomal subunit. Forms a tight heterodimer with protein bS6.

Its function is as follows. Binds as a heterodimer with protein bS6 to the central domain of the 16S rRNA, where it helps stabilize the platform of the 30S subunit. In Bacteroides thetaiotaomicron (strain ATCC 29148 / DSM 2079 / JCM 5827 / CCUG 10774 / NCTC 10582 / VPI-5482 / E50), this protein is Small ribosomal subunit protein bS18.